Reading from the N-terminus, the 136-residue chain is MARTKQTARKSTGGKAPRKQLATKAARKSAPATGGVKKPHRYRPGTVALREIRRYQKSTELLIRKLPFQRLVREIAQDFKTELRFQSSAVMALQEASEAYLVRLFEDTNLCAIHAKRVTIMPKDIQLARRIRGERA.

The segment at 1-43 (MARTKQTARKSTGGKAPRKQLATKAARKSAPATGGVKKPHRYR) is disordered. An N6-methylated lysine modification is found at Lys-5. An N6-acetyllysine; alternate modification is found at Lys-10. Lys-10 is subject to N6-methylated lysine; alternate. Phosphoserine is present on Ser-11. N6-acetyllysine occurs at positions 15 and 24. N6-methylated lysine is present on residues Lys-28, Lys-37, and Lys-80.

Belongs to the histone H3 family. As to quaternary structure, the nucleosome is a histone octamer containing two molecules each of H2A, H2B, H3 and H4 assembled in one H3-H4 heterotetramer and two H2A-H2B heterodimers. The octamer wraps approximately 147 bp of DNA. In terms of processing, acetylation is generally linked to gene activation. Post-translationally, methylation at Lys-5 is linked to gene activation. Methylation at Lys-10 is linked to gene repression.

Its subcellular location is the nucleus. It is found in the chromosome. In terms of biological role, core component of nucleosome. Nucleosomes wrap and compact DNA into chromatin, limiting DNA accessibility to the cellular machineries which require DNA as a template. Histones thereby play a central role in transcription regulation, DNA repair, DNA replication and chromosomal stability. DNA accessibility is regulated via a complex set of post-translational modifications of histones, also called histone code, and nucleosome remodeling. The protein is Histone H3, embryonic of Strongylocentrotus purpuratus (Purple sea urchin).